A 478-amino-acid chain; its full sequence is PRAME family member 4 (478 aa).

Residues 99–126 (RWKLQVLDLQDVCENFWMVWSEAMAHGC) form an LRR 1; degenerate repeat. The stretch at 181-205 (HLCCKKLKILGMPFRNIRSILKMVN) is one LRR 2; degenerate repeat. Residues 206–232 (LDCIQEVEVNCKWVLPILTQFTPYLGH) form an LRR 3; degenerate repeat. An LRR 4; degenerate repeat occupies 233-268 (MRNLQKLILSHMDVSRYVSPEQKKEIVTQFTTQFLK). LRR repeat units follow at residues 269–294 (LRCLQKLYMNSVSFLEGHLDQLLSCL), 295–326 (KTSLKFLTITNCVLLESDLKHLSQCPSISQLK), 327–347 (TLDLSGIRLTNYSLVPLQILL), 351–378 (AATLEYLDLDDCGIIDSQVNAILPALSR), and 379–403 (CFELNTFSFCGNPICMATLENLLSH).

This sequence belongs to the PRAME family.

The sequence is that of PRAME family member 4 from Homo sapiens (Human).